Reading from the N-terminus, the 188-residue chain is MTTQPPQDQTSTTPSLPPHLDPTTYPRTLTSATHNIHLELTYSTLNPTVALEHTSSPAAGANVLFLGTTRNTFEGRAVSQLSYTSYPPLALKSLMSIATRAAEKFDLKGVYIAHRLGVVPISEASIVVAVSAGHRGMAWKAGEEVLEEVKEKVEIWKREEFVDGGMEWRENRERDAEGRLLSSTEGGK.

Positions 1–14 (MTTQPPQDQTSTTP) are enriched in low complexity. Residues 1-23 (MTTQPPQDQTSTTPSLPPHLDPT) form a disordered region. Substrate-binding positions include 134–135 (HR), Lys-150, and 157–159 (KRE).

It belongs to the MoaE family. MOCS2B subfamily. Heterotetramer; composed of 2 small (MOCS2A) and 2 large (MOCS2B) subunits.

It is found in the cytoplasm. It catalyses the reaction 2 [molybdopterin-synthase sulfur-carrier protein]-C-terminal-Gly-aminoethanethioate + cyclic pyranopterin phosphate + H2O = molybdopterin + 2 [molybdopterin-synthase sulfur-carrier protein]-C-terminal Gly-Gly + 2 H(+). The protein operates within cofactor biosynthesis; molybdopterin biosynthesis. Its function is as follows. Catalytic subunit of the molybdopterin synthase complex, a complex that catalyzes the conversion of precursor Z into molybdopterin. Acts by mediating the incorporation of 2 sulfur atoms from thiocarboxylated MOCS2A into precursor Z to generate a dithiolene group. This is Molybdopterin synthase catalytic subunit from Neosartorya fischeri (strain ATCC 1020 / DSM 3700 / CBS 544.65 / FGSC A1164 / JCM 1740 / NRRL 181 / WB 181) (Aspergillus fischerianus).